The following is a 172-amino-acid chain: Methylated-DNA--protein-cysteine methyltransferase (172 aa).

Cys-142 functions as the Nucleophile; methyl group acceptor in the catalytic mechanism.

Belongs to the MGMT family.

It localises to the cytoplasm. The catalysed reaction is a 6-O-methyl-2'-deoxyguanosine in DNA + L-cysteinyl-[protein] = S-methyl-L-cysteinyl-[protein] + a 2'-deoxyguanosine in DNA. It catalyses the reaction a 4-O-methyl-thymidine in DNA + L-cysteinyl-[protein] = a thymidine in DNA + S-methyl-L-cysteinyl-[protein]. Involved in the cellular defense against the biological effects of O6-methylguanine (O6-MeG) and O4-methylthymine (O4-MeT) in DNA. Repairs the methylated nucleobase in DNA by stoichiometrically transferring the methyl group to a cysteine residue in the enzyme. This is a suicide reaction: the enzyme is irreversibly inactivated. The polypeptide is Methylated-DNA--protein-cysteine methyltransferase (Pyrococcus abyssi (strain GE5 / Orsay)).